A 332-amino-acid polypeptide reads, in one-letter code: Biotin synthase (332 aa).

Positions 51 to 279 (YKVQLASLLS…LSRVRLSAGR (229 aa)) constitute a Radical SAM core domain. Residues Cys66, Cys70, and Cys73 each contribute to the [4Fe-4S] cluster site. [2Fe-2S] cluster-binding residues include Cys110, Cys142, Cys202, and Arg274.

It belongs to the radical SAM superfamily. Biotin synthase family. Homodimer. The cofactor is [4Fe-4S] cluster. [2Fe-2S] cluster serves as cofactor.

The catalysed reaction is (4R,5S)-dethiobiotin + (sulfur carrier)-SH + 2 reduced [2Fe-2S]-[ferredoxin] + 2 S-adenosyl-L-methionine = (sulfur carrier)-H + biotin + 2 5'-deoxyadenosine + 2 L-methionine + 2 oxidized [2Fe-2S]-[ferredoxin]. Its pathway is cofactor biosynthesis; biotin biosynthesis; biotin from 7,8-diaminononanoate: step 2/2. Catalyzes the conversion of dethiobiotin (DTB) to biotin by the insertion of a sulfur atom into dethiobiotin via a radical-based mechanism. This chain is Biotin synthase, found in Prochlorococcus marinus (strain MIT 9211).